A 534-amino-acid chain; its full sequence is Serine/threonine-protein kinase NLK (534 aa).

Sufficient for interaction with DAPK3 regions lie at residues 8-132 (LVSC…KAHH) and 131-423 (HHHQ…SKRI). 2 required for interaction with TAB2 regions span residues 8-311 (LVSC…VVTQ) and 441-534 (YHTC…LVWE). Disordered stretches follow at residues 29–79 (AAAA…SSAA) and 97–147 (QQPY…DIEP). Over residues 33 to 61 (GHHHHHHHHLPHLPPPHLHHHHHPQHHLH) the composition is skewed to basic residues. The segment covering 110–126 (PGPAAAAPAQVQAAAAA) has biased composition (low complexity). The span at 129–138 (KAHHHQHSHH) shows a compositional bias: basic residues. The 290-residue stretch at 145 to 434 (IEPDRPIGYG…AKDALAHPYL (290 aa)) folds into the Protein kinase domain. ATP contacts are provided by residues 151-159 (IGYGAFGVV) and Lys-174. Asp-271 serves as the catalytic Proton acceptor. Phosphothreonine; by autocatalysis is present on Thr-305. A TQE motif is present at residues 305–307 (TQE). Residues 435 to 534 (DEGRLRYHTC…EMPPSPLVWE (100 aa)) form a required for homodimerization and kinase activation and localization to the nucleus region. Ser-529 is modified (phosphoserine).

This sequence belongs to the protein kinase superfamily. CMGC Ser/Thr protein kinase family. MAP kinase subfamily. As to quaternary structure, homodimer. Homodimerization is required for intermolecular autophosphorylation, kinase activation and nuclear localization. May interact with components of cullin-RING-based SCF (SKP1-CUL1-F-box protein) E3 ubiquitin-protein ligase complexes. Interacts with LEF1, MEF2A, MYBL1 and MYBL2. Interacts with the upstream activating kinases HIPK2 and MAP3K7/TAK1. Interaction with MAP3K7/TAK1 seems to be indirect, and may be mediated by other proteins such as STAT3, TAB1 and TAB2. Interacts with and phosphorylates a number of transcription factors including FOXO1, FOXO3, FOXO4, MYB, NOTCH1 and TCF7L2/TCF4. Interacts with DAPK3/ZIPK, and this interaction may disrupt interaction with transcription factors such as TCF7L2/TCF4. Forms a transcriptional repressor complex with CHD7, PPARG and SETDB1. Interacts with RNF138/NARF. Interacts with ATF5; the interaction stabilizes ATF5 at the protein level in a kinase-independent manner. Mg(2+) is required as a cofactor. In terms of processing, phosphorylated on Thr-305. Intermolecular autophosphorylation on Thr-305 activates the enzyme.

It is found in the nucleus. The protein resides in the cytoplasm. The enzyme catalyses L-seryl-[protein] + ATP = O-phospho-L-seryl-[protein] + ADP + H(+). It catalyses the reaction L-threonyl-[protein] + ATP = O-phospho-L-threonyl-[protein] + ADP + H(+). Its activity is regulated as follows. Activated by the non-canonical Wnt signaling pathway, in which WNT5A leads to activation of MAP3K7/TAK1 and HIPK2, which subsequently phosphorylates and activates this protein. Activated by dimerization and subsequent intermolecular autophosphorylation on Thr-305. Other cytokines such as IL6 may also activate this regulatory circuit. Its function is as follows. Serine/threonine-protein kinase that regulates a number of transcription factors with key roles in cell fate determination. Positive effector of the non-canonical Wnt signaling pathway, acting downstream of WNT5A, MAP3K7/TAK1 and HIPK2. Negative regulator of the canonical Wnt/beta-catenin signaling pathway. Binds to and phosphorylates TCF7L2/TCF4 and LEF1, promoting the dissociation of the TCF7L2/LEF1/beta-catenin complex from DNA, as well as the ubiquitination and subsequent proteolysis of LEF1. Together these effects inhibit the transcriptional activation of canonical Wnt/beta-catenin target genes. Negative regulator of the Notch signaling pathway. Binds to and phosphorylates NOTCH1, thereby preventing the formation of a transcriptionally active ternary complex of NOTCH1, RBPJ/RBPSUH and MAML1. Negative regulator of the MYB family of transcription factors. Phosphorylation of MYB leads to its subsequent proteolysis while phosphorylation of MYBL1 and MYBL2 inhibits their interaction with the coactivator CREBBP. Other transcription factors may also be inhibited by direct phosphorylation of CREBBP itself. Acts downstream of IL6 and MAP3K7/TAK1 to phosphorylate STAT3, which is in turn required for activation of NLK by MAP3K7/TAK1. Upon IL1B stimulus, cooperates with ATF5 to activate the transactivation activity of C/EBP subfamily members. Phosphorylates ATF5 but also stabilizes ATF5 protein levels in a kinase-independent manner. Acts as an inhibitor of the mTORC1 complex in response to osmotic stress by mediating phosphorylation of RPTOR, thereby preventing recruitment of the mTORC1 complex to lysosomes. This chain is Serine/threonine-protein kinase NLK (NLK), found in Bos taurus (Bovine).